Here is a 257-residue protein sequence, read N- to C-terminus: Thiazole synthase (257 aa).

Lysine 95 acts as the Schiff-base intermediate with DXP in catalysis. 1-deoxy-D-xylulose 5-phosphate is bound by residues glycine 156, 182 to 183 (AG), and 204 to 205 (NT).

Belongs to the ThiG family. As to quaternary structure, homotetramer. Forms heterodimers with either ThiH or ThiS.

It is found in the cytoplasm. The enzyme catalyses [ThiS sulfur-carrier protein]-C-terminal-Gly-aminoethanethioate + 2-iminoacetate + 1-deoxy-D-xylulose 5-phosphate = [ThiS sulfur-carrier protein]-C-terminal Gly-Gly + 2-[(2R,5Z)-2-carboxy-4-methylthiazol-5(2H)-ylidene]ethyl phosphate + 2 H2O + H(+). Its pathway is cofactor biosynthesis; thiamine diphosphate biosynthesis. Its function is as follows. Catalyzes the rearrangement of 1-deoxy-D-xylulose 5-phosphate (DXP) to produce the thiazole phosphate moiety of thiamine. Sulfur is provided by the thiocarboxylate moiety of the carrier protein ThiS. In vitro, sulfur can be provided by H(2)S. This is Thiazole synthase from Fusobacterium nucleatum subsp. nucleatum (strain ATCC 25586 / DSM 15643 / BCRC 10681 / CIP 101130 / JCM 8532 / KCTC 2640 / LMG 13131 / VPI 4355).